We begin with the raw amino-acid sequence, 372 residues long: Inner membrane protein YbiR (372 aa).

Topologically, residues 1–13 (MSLPFLRTLQGDR) are periplasmic. 2 helical membrane passes run 14–34 (FFQL…FAPK) and 35–55 (SWPA…MLLT). Residues 56–85 (KGVELSGYFDVLGRKMVRRFATERRLAMFM) lie on the Periplasmic side of the membrane. The helical transmembrane segment at 86 to 106 (VLAAALLSTFLTNDVALFIVV) threads the bilayer. Residues 107–122 (PLTITLKRLCEIPVNR) lie on the Cytoplasmic side of the membrane. Residues 123–143 (LIIFEALAVNAGSLLTPIGNP) form a helical membrane-spanning segment. At 144–155 (QNILIWGRSGLS) the chain is on the periplasmic side. The helical transmembrane segment at 156 to 176 (FAGFIAQMAPLAGAMMLTLLL) threads the bilayer. Residues 177–208 (LCWCCFPGKAMQYHTGVQTPEWKPRLVWSCLG) lie on the Cytoplasmic side of the membrane. A helical membrane pass occupies residues 209–229 (LYIVFLTALEFKQELWGLVIV). Over 230 to 247 (AAGFALLARRVVLSVDWT) the chain is Periplasmic. The chain crosses the membrane as a helical span at residues 248–268 (LLLVFMAMFIDVHLLTQLPAL). At 269 to 283 (QGVLGNVSHLSEPGL) the chain is on the cytoplasmic side. A helical transmembrane segment spans residues 284–304 (WLTAIGLSQVISNVPSTILLL). Topologically, residues 305-309 (NYVPP) are periplasmic. The helical transmembrane segment at 310-330 (SLLLVWAVNVGGFGLLPGSLA) threads the bilayer. At 331–348 (NLIALRMANDRRIWWRFH) the chain is on the cytoplasmic side. A helical membrane pass occupies residues 349–369 (LYSIPMLLWAALVGYVLLVIL). The Periplasmic segment spans residues 370–372 (PAN).

This sequence belongs to the CitM (TC 2.A.11) transporter family.

The protein resides in the cell inner membrane. This Escherichia coli (strain K12) protein is Inner membrane protein YbiR (ybiR).